Here is a 338-residue protein sequence, read N- to C-terminus: Mitotic spindle-associated protein SHE1 (338 aa).

Basic and acidic residues predominate over residues 1–14; it reads MNDKLQEEHNEKDT. Disordered stretches follow at residues 1-29, 67-88, and 116-146; these read MNDK…MSID, LKDQ…SGSY, and HTPK…IPYT. A compositionally biased stretch (polar residues) spans 72–88; the sequence is EQQYNGDKNNEPKSGSY. Serine 165 carries the post-translational modification Phosphoserine. Disordered regions lie at residues 210 to 263 and 284 to 338; these read TNSL…QGTN and RSTS…PIWR. A compositionally biased stretch (low complexity) spans 216–234; sequence INSAHRNTSSSSTASSIPR. Over residues 242–254 the composition is skewed to basic and acidic residues; it reads SIRDLHAKTKPVE. Composition is skewed to polar residues over residues 284–297 and 312–330; these read RSTS…GTSA and SKTS…ATGT.

Belongs to the SHE1 family.

The protein localises to the cytoplasm. It is found in the cytoskeleton. It localises to the spindle. Its subcellular location is the bud neck. Its function is as follows. May have a role related to the spindle integrity function of the DAM1 complex, which is essential for proper chromosome segregation. Causes growth arrest when highly overexpressed. The chain is Mitotic spindle-associated protein SHE1 (SHE1) from Saccharomyces cerevisiae (strain YJM789) (Baker's yeast).